The sequence spans 52 residues: Proteinase inhibitor (52 aa).

Glutamine 1 carries the post-translational modification Pyrrolidone carboxylic acid. 4 disulfides stabilise this stretch: cysteine 3-cysteine 40, cysteine 6-cysteine 24, cysteine 7-cysteine 36, and cysteine 13-cysteine 49.

It belongs to the protease inhibitor I20 (potato type II proteinase inhibitor) family.

The protein resides in the secreted. The sequence is that of Proteinase inhibitor from Solanum melongena (Eggplant).